Here is a 481-residue protein sequence, read N- to C-terminus: MQITREKWSKNFSEWFDWVLREGEFYDYGRYPVKGMGVWMPYGFKLRQNIISIIRNLLDSTGHEEVLFPLLIPEDLLSRESTHIKGFEEEVFWVTKGGSEDLDVKLALRPTSEVAITTMENLWLKSYKQLPKKYYQIVSVFRYETKATRPMIRLREITTFKEAHTVHETYDDAQRQVEEAIEIYKKIFNNLAIPYVLSERPEWDRFAGALHTYAFDTIMPDGKVMQIGTVHHLGQNFSRALDFKIQKKDGSLDYPHQTSYGISDRAIASVIAIHGDDHGPILPPSVAPIKVVVVPIPAKNEEGTQQVMKYSVEICEMLNKNNITCVTDQDTEKTPGEKFYIWEIKGVPIRLEIGPRELASSTVFIKRRDNLKSYTVKKEEVVNKVKEVLNEIQEDLRKRAWESLKSRIEYANDIEKAKNLLENNSGIVEVPWCGSKECGLKIEELTNARVLGYPIEDRKVNDKCVICKMNAKTVLRVAKTY.

The protein belongs to the class-II aminoacyl-tRNA synthetase family. ProS type 3 subfamily. Homodimer.

Its subcellular location is the cytoplasm. The catalysed reaction is tRNA(Pro) + L-proline + ATP = L-prolyl-tRNA(Pro) + AMP + diphosphate. Catalyzes the attachment of proline to tRNA(Pro) in a two-step reaction: proline is first activated by ATP to form Pro-AMP and then transferred to the acceptor end of tRNA(Pro). The polypeptide is Proline--tRNA ligase (Saccharolobus islandicus (strain M.16.27) (Sulfolobus islandicus)).